The following is an 82-amino-acid chain: uncharacterized protein (82 aa).

This is an uncharacterized protein from Saccharomyces cerevisiae (strain ATCC 204508 / S288c) (Baker's yeast).